The sequence spans 592 residues: A-type ATP synthase subunit A (592 aa).

Gly231 to Thr238 serves as a coordination point for ATP.

Belongs to the ATPase alpha/beta chains family. In terms of assembly, has multiple subunits with at least A(3), B(3), C, D, E, F, H, I and proteolipid K(x).

The protein localises to the cell membrane. The enzyme catalyses ATP + H2O + 4 H(+)(in) = ADP + phosphate + 5 H(+)(out). In terms of biological role, component of the A-type ATP synthase that produces ATP from ADP in the presence of a proton gradient across the membrane. The A chain is the catalytic subunit. This is A-type ATP synthase subunit A from Staphylothermus marinus (strain ATCC 43588 / DSM 3639 / JCM 9404 / F1).